The primary structure comprises 462 residues: CCA-adding enzyme (462 aa).

Residues serine 54 and arginine 57 each coordinate ATP. 2 residues coordinate CTP: serine 54 and arginine 57. Residues aspartate 66, aspartate 68, and aspartate 117 each contribute to the Mg(2+) site. Histidine 140, lysine 160, and tyrosine 169 together coordinate ATP. CTP is bound by residues histidine 140, lysine 160, and tyrosine 169.

Belongs to the tRNA nucleotidyltransferase/poly(A) polymerase family. Archaeal CCA-adding enzyme subfamily. Homodimer. The cofactor is Mg(2+).

The enzyme catalyses a tRNA precursor + 2 CTP + ATP = a tRNA with a 3' CCA end + 3 diphosphate. It catalyses the reaction a tRNA with a 3' CCA end + 2 CTP + ATP = a tRNA with a 3' CCACCA end + 3 diphosphate. Its function is as follows. Catalyzes the addition and repair of the essential 3'-terminal CCA sequence in tRNAs without using a nucleic acid template. Adds these three nucleotides in the order of C, C, and A to the tRNA nucleotide-73, using CTP and ATP as substrates and producing inorganic pyrophosphate. tRNA 3'-terminal CCA addition is required both for tRNA processing and repair. Also involved in tRNA surveillance by mediating tandem CCA addition to generate a CCACCA at the 3' terminus of unstable tRNAs. While stable tRNAs receive only 3'-terminal CCA, unstable tRNAs are marked with CCACCA and rapidly degraded. The chain is CCA-adding enzyme from Halorubrum lacusprofundi (strain ATCC 49239 / DSM 5036 / JCM 8891 / ACAM 34).